Consider the following 153-residue polypeptide: Protein E6 (153 aa).

Zinc fingers lie at residues 29–65 (CVWC…CGKC) and 102–138 (CYIC…CMNC).

It belongs to the papillomaviridae E6 protein family. In terms of assembly, forms homodimers. Interacts with ubiquitin-protein ligase UBE3A/E6-AP; this interaction stimulates UBE3A ubiquitin activity. Interacts with host TP53 and EP300; this interaction inhibits TP53 activity.

It is found in the host cytoplasm. The protein localises to the host nucleus. In terms of biological role, plays a major role in the induction and maintenance of cellular transformation. E6 associates with host UBE3A/E6-AP ubiquitin-protein ligase and modulates its activity. Sequesters tumor suppressor TP53 in the host cytoplasm and modulates its activity by interacting with host EP300 that results in the reduction of TP53 acetylation and activation. In turn, apoptosis induced by DNA damage is inhibited. E6 also protects host keratinocytes from apoptosis by mediating the degradation of host BAK1. May also inhibit host immune response. This Human papillomavirus type 2a protein is Protein E6.